The primary structure comprises 54 residues: MMCVCIPKKKLMDWRVYYIYSYVVCLYMCGSDCACICVLACVVQCVCFNVEMRL.

A helical transmembrane segment spans residues 21-43 (SYVVCLYMCGSDCACICVLACVV).

It localises to the membrane. This is an uncharacterized protein from Saccharomyces cerevisiae (strain ATCC 204508 / S288c) (Baker's yeast).